Reading from the N-terminus, the 511-residue chain is MEEIQRYLQPDSSSSQQHNFLYPLIFQEYIYALAHDHGLNRNRSILLENPGYNNKFSFLIVKRLITRMYQQNHFRISTNDSNKNPFLGCNKSLYSQMISEGFAFIVEIPFSLRLISSLSSFEGKKIFKSHNLRSIHSTFPFLEDNFAHLNYVLDILIPYPVHLEILVQTLRYWVKDASSLHLLRFFLHEYWNLNSLITSKKPGYSFSKTNQRFFFFLYNSYVYESESTFVFLRNQSSHLRSTSFGALLERIYFYGKIERLVEVFAKDFQVTLWLFKDPFMHYVRYQGKSILASKGTFLLMNKWKFYLVNFWQCNFSLCFPTGRIHINQLSNHSRDFMGYLSSVRLNPSMVRSQMLENAFLINNGIKKFDTLVPIIPLIGSLAKANFCTVLGHPISKPVWSDLSDSDIIDRFGRICRNLFHYYSGSSKKKTLYRIKYILRLSCARTLARKHKSTVRTFLKRSGSELLEEFLTSEEQVLSLTFPRASSSLWGVYRSRIWYLDIFCINDLANYQ.

The protein belongs to the intron maturase 2 family. MatK subfamily.

It is found in the plastid. The protein resides in the chloroplast. Usually encoded in the trnK tRNA gene intron. Probably assists in splicing its own and other chloroplast group II introns. This chain is Maturase K, found in Mandragora officinarum (Mandrake).